The following is a 320-amino-acid chain: MKLNSLINLIQKSIYSCTLLLIILNIICVAPNSSNAFPIYAQQAYESPREATGRIVCANCHLAQKPVEIEAPQAVLPNTVFETVVKIPYDSNAKQILGNGSKGGLNVGAVVILPEGFKLAPVNRLSTELKEKTRNLYIQPYSAKQDNILVIGPISGDKNREIVFPILSPDPAKDKKAHFFKYPIYVGGNRGRGQIYPTGDKSNNNIVSALSSGKINKIELLDKGGFIIHVTNSSNVESTQKISPGLELRVKEGDTIQLDQALNSDPNVGGFGQNETEIVLQSPNRIKGMIVFFFASVLAQIFFVLKKKQFEKVQAAEMNF.

A signal peptide spans 1–35 (MKLNSLINLIQKSIYSCTLLLIILNIICVAPNSSN). Heme is bound by residues Phe-37, Cys-57, Cys-60, and His-61. A helical transmembrane segment spans residues 286–306 (IKGMIVFFFASVLAQIFFVLK).

The protein belongs to the cytochrome f family. As to quaternary structure, the 4 large subunits of the cytochrome b6-f complex are cytochrome b6, subunit IV (17 kDa polypeptide, petD), cytochrome f and the Rieske protein, while the 4 small subunits are PetG, PetL, PetM and PetN. The complex functions as a dimer. Heme is required as a cofactor.

It localises to the plastid. It is found in the chloroplast thylakoid membrane. In terms of biological role, component of the cytochrome b6-f complex, which mediates electron transfer between photosystem II (PSII) and photosystem I (PSI), cyclic electron flow around PSI, and state transitions. In Pyropia yezoensis (Susabi-nori), this protein is Cytochrome f.